The primary structure comprises 67 residues: Small ribosomal subunit protein bS21 (67 aa).

Belongs to the bacterial ribosomal protein bS21 family.

This Magnetococcus marinus (strain ATCC BAA-1437 / JCM 17883 / MC-1) protein is Small ribosomal subunit protein bS21.